Here is a 194-residue protein sequence, read N- to C-terminus: 7-methyl-GTP pyrophosphatase (194 aa).

The active-site Proton acceptor is Asp-70.

The protein belongs to the Maf family. YceF subfamily. A divalent metal cation is required as a cofactor.

The protein localises to the cytoplasm. The catalysed reaction is N(7)-methyl-GTP + H2O = N(7)-methyl-GMP + diphosphate + H(+). Functionally, nucleoside triphosphate pyrophosphatase that hydrolyzes 7-methyl-GTP (m(7)GTP). May have a dual role in cell division arrest and in preventing the incorporation of modified nucleotides into cellular nucleic acids. The chain is 7-methyl-GTP pyrophosphatase from Ralstonia nicotianae (strain ATCC BAA-1114 / GMI1000) (Ralstonia solanacearum).